The following is a 145-amino-acid chain: Peptide methionine sulfoxide reductase MsrB (145 aa).

The MsrB domain maps to 6–129 (KNERLQQLTD…NSAALRFIPV (124 aa)). The Nucleophile role is filled by Cys118.

Belongs to the MsrB Met sulfoxide reductase family.

It carries out the reaction L-methionyl-[protein] + [thioredoxin]-disulfide + H2O = L-methionyl-(R)-S-oxide-[protein] + [thioredoxin]-dithiol. The protein is Peptide methionine sulfoxide reductase MsrB of Listeria monocytogenes serovar 1/2a (strain ATCC BAA-679 / EGD-e).